The chain runs to 799 residues: Rho GTPase-activating protein gacI (799 aa).

A Rho-GAP domain is found at 226-451 (IKLEEVFARE…LLVEHVLTIF (226 aa)). Over residues 472–520 (RSQSDISSQTKPLPSLPTSPQNRSAIITGDSSSPSLNTPPVKSSLNSSD) the composition is skewed to polar residues. 2 disordered regions span residues 472 to 572 (RSQS…PTSN) and 741 to 799 (EKQQ…LSNQ). Low complexity predominate over residues 525-549 (DNGSNNNNNNNTTNTITNNGIADTA). Over residues 550-568 (TPPPPTTPTAPTTPPPPTT) the composition is skewed to pro residues. Low complexity-rich tracts occupy residues 743-752 (QQQQQQQQTN) and 759-791 (ISSN…LNSS).

Its subcellular location is the cytoplasm. Rho GTPase-activating protein involved in the signal transduction pathway. The polypeptide is Rho GTPase-activating protein gacI (gacI) (Dictyostelium discoideum (Social amoeba)).